Reading from the N-terminus, the 341-residue chain is Serpentine receptor class epsilon-12 (341 aa).

7 consecutive transmembrane segments (helical) span residues 30 to 50 (TAFYVADTINMMFYIWVLFSA), 57 to 77 (FTLVSGTQYVIHFFDNLAIIV), 101 to 121 (AMTFSVYCIVAAMCSLPFSIL), 140 to 160 (YISYALVFLLNFIGIIGAILL), 167 to 187 (IFVVAFLMILNLFALLTNQFL), 230 to 250 (LNFIILYMGFMNVCLVISVLF), and 262 to 282 (ICSLALDASIFFYSFAIPQIM).

Belongs to the nematode receptor-like protein sre family.

Its subcellular location is the membrane. In Caenorhabditis elegans, this protein is Serpentine receptor class epsilon-12 (sre-12).